We begin with the raw amino-acid sequence, 133 residues long: Interleukin-5 (133 aa).

Residues 1-20 (MRRMLLHLSVLTLSCVWATA) form the signal peptide. N-linked (GlcNAc...) asparagine glycosylation is found at N46, N75, and N89.

Belongs to the IL-5 family. As to quaternary structure, homodimer; disulfide-linked. Interacts with IL5RA. Interacts with CSF2RB. Expressed in lymphoid cells, including spleen, thymus, lymph nodes and peripheral blood mononuclear cells.

It localises to the secreted. Functionally, homodimeric cytokine expressed predominantly by T-lymphocytes and NK cells that plays an important role in the survival, differentiation, and chemotaxis of eosinophils. Also acts on activated and resting B-cells to induce immunoglobulin production, growth, and differentiation. Mechanistically, exerts its biological effects through a receptor composed of IL5RA subunit and the cytokine receptor common subunit beta/CSF2RB. Binding to the receptor leads to activation of various kinases including LYN, SYK and JAK2 and thereby propagates signals through the RAS-MAPK and JAK-STAT5 pathways respectively. The chain is Interleukin-5 (Il5) from Mus musculus (Mouse).